The primary structure comprises 397 residues: Tryptophan synthase beta chain (397 aa).

N6-(pyridoxal phosphate)lysine is present on lysine 87.

This sequence belongs to the TrpB family. As to quaternary structure, tetramer of two alpha and two beta chains. Pyridoxal 5'-phosphate serves as cofactor.

It catalyses the reaction (1S,2R)-1-C-(indol-3-yl)glycerol 3-phosphate + L-serine = D-glyceraldehyde 3-phosphate + L-tryptophan + H2O. The protein operates within amino-acid biosynthesis; L-tryptophan biosynthesis; L-tryptophan from chorismate: step 5/5. In terms of biological role, the beta subunit is responsible for the synthesis of L-tryptophan from indole and L-serine. The polypeptide is Tryptophan synthase beta chain (Escherichia fergusonii (strain ATCC 35469 / DSM 13698 / CCUG 18766 / IAM 14443 / JCM 21226 / LMG 7866 / NBRC 102419 / NCTC 12128 / CDC 0568-73)).